Here is a 500-residue protein sequence, read N- to C-terminus: Citrate lyase alpha chain (500 aa).

As to quaternary structure, oligomer with a subunit composition of (alpha,beta,gamma)6.

The protein resides in the cytoplasm. The catalysed reaction is citrate = oxaloacetate + acetate. The enzyme catalyses citrate + acetyl-CoA = (3S)-citryl-CoA + acetate. In terms of biological role, represents a citrate:acetyl-ACP transferase. In Haemophilus influenzae (strain ATCC 51907 / DSM 11121 / KW20 / Rd), this protein is Citrate lyase alpha chain (citF).